The following is a 204-amino-acid chain: DNA-directed RNA polymerase III subunit RPC8 (204 aa).

The segment at 158-178 (VDTSPTGPSSAEAASSSEELP) is disordered. Residues 166–175 (SSAEAASSSE) show a composition bias toward low complexity.

This sequence belongs to the eukaryotic RPB7/RPC8 RNA polymerase subunit family. Component of the RNA polymerase III complex consisting of 17 subunits: a ten-subunit horseshoe-shaped catalytic core composed of POLR3A/RPC1, POLR3B/RPC2, POLR1C/RPAC1, POLR1D/RPAC2, POLR3K/RPC10, POLR2E/RPABC1, POLR2F/RPABC2, POLR2H/RPABC3, POLR2K/RPABC4 and POLR2L/RPABC5; a mobile stalk composed of two subunits POLR3H/RPC8 and CRCP/RPC9, protruding from the core and functioning primarily in transcription initiation; and additional subunits homologous to general transcription factors of the RNA polymerase II machinery, POLR3C/RPC3-POLR3F/RPC6-POLR3G/RPC7 heterotrimer required for transcription initiation and POLR3D/RPC4-POLR3E/RPC5 heterodimer involved in both transcription initiation and termination. Interacts with CRCP/RPC9. POLR3H/RPC8 and CRCP/RPC9 probably form a Pol III subcomplex.

It is found in the nucleus. Its function is as follows. DNA-dependent RNA polymerase catalyzes the transcription of DNA into RNA using the four ribonucleoside triphosphates as substrates. Specific peripheric component of RNA polymerase III (Pol III) which synthesizes small non-coding RNAs including 5S rRNA, snRNAs, tRNAs and miRNAs from at least 500 distinct genomic loci. With CRCP/RPC9 forms a mobile stalk that protrudes from Pol III core and functions primarily in transcription initiation. Pol III plays a key role in sensing and limiting infection by intracellular bacteria and DNA viruses. Acts as nuclear and cytosolic DNA sensor involved in innate immune response. Can sense non-self dsDNA that serves as template for transcription into dsRNA. The non-self RNA polymerase III transcripts, such as Epstein-Barr virus-encoded RNAs (EBERs) induce type I interferon and NF-kappa-B through the RIG-I pathway. This is DNA-directed RNA polymerase III subunit RPC8 (POLR3H) from Bos taurus (Bovine).